Here is a 274-residue protein sequence, read N- to C-terminus: F-box protein SKIP5 (274 aa).

Residues 32-79 (LTSLNNLDDGCLMHILSFLSPIPDRYNTALVCHRWRYLACHPRLWLRV) form the F-box domain.

In terms of assembly, part of a SCF (SKP1-cullin-F-box) protein ligase complex. Interacts with SKP1A/ASK1.

It functions in the pathway protein modification; protein ubiquitination. In Arabidopsis thaliana (Mouse-ear cress), this protein is F-box protein SKIP5 (SKIP5).